Consider the following 147-residue polypeptide: Hemoglobin subunit beta (147 aa).

Position 2 is an N-acetylvaline (Val2). Positions 3–147 constitute a Globin domain; sequence HLTGEEKAAV…VANALAHKYH (145 aa). Residue Thr13 is modified to Phosphothreonine. Residue Ser45 is modified to Phosphoserine. N6-acetyllysine is present on Lys60. His64 is a binding site for heme b. The residue at position 83 (Lys83) is an N6-acetyllysine. His93 provides a ligand contact to heme b. Cys94 carries the post-translational modification S-nitrosocysteine. Residue Lys145 is modified to N6-acetyllysine.

It belongs to the globin family. Heterotetramer of two alpha chains and two beta chains. As to expression, red blood cells.

Its function is as follows. Involved in oxygen transport from the lung to the various peripheral tissues. The protein is Hemoglobin subunit beta (HBB) of Ailuropoda melanoleuca (Giant panda).